The following is a 318-amino-acid chain: L-lactate dehydrogenase (318 aa).

NAD(+)-binding positions include Val-18, Asp-39, Lys-44, Tyr-69, and 83–84 (GA). Residues Gln-86 and Arg-92 each contribute to the substrate site. Residues Ser-105, 122–124 (VSN), and Ser-147 each bind NAD(+). 124 to 127 (NPVD) contacts substrate. Substrate is bound at residue 152–155 (DTSR). His-179 acts as the Proton acceptor in catalysis. A Phosphotyrosine modification is found at Tyr-225. Thr-234 lines the substrate pocket.

It belongs to the LDH/MDH superfamily. LDH family. As to quaternary structure, homotetramer.

It localises to the cytoplasm. The catalysed reaction is (S)-lactate + NAD(+) = pyruvate + NADH + H(+). It functions in the pathway fermentation; pyruvate fermentation to lactate; (S)-lactate from pyruvate: step 1/1. Functionally, catalyzes the conversion of lactate to pyruvate. This chain is L-lactate dehydrogenase, found in Clostridium botulinum (strain Kyoto / Type A2).